The sequence spans 171 residues: ATP synthase subunit b (171 aa).

The chain crosses the membrane as a helical span at residues 12-34; it reads FGLNLNLFETNVINLAVVIFGLY.

The protein belongs to the ATPase B chain family. As to quaternary structure, F-type ATPases have 2 components, F(1) - the catalytic core - and F(0) - the membrane proton channel. F(1) has five subunits: alpha(3), beta(3), gamma(1), delta(1), epsilon(1). F(0) has four main subunits: a(1), b(1), b'(1) and c(10-14). The alpha and beta chains form an alternating ring which encloses part of the gamma chain. F(1) is attached to F(0) by a central stalk formed by the gamma and epsilon chains, while a peripheral stalk is formed by the delta, b and b' chains.

It is found in the cellular thylakoid membrane. In terms of biological role, f(1)F(0) ATP synthase produces ATP from ADP in the presence of a proton or sodium gradient. F-type ATPases consist of two structural domains, F(1) containing the extramembraneous catalytic core and F(0) containing the membrane proton channel, linked together by a central stalk and a peripheral stalk. During catalysis, ATP synthesis in the catalytic domain of F(1) is coupled via a rotary mechanism of the central stalk subunits to proton translocation. Functionally, component of the F(0) channel, it forms part of the peripheral stalk, linking F(1) to F(0). The protein is ATP synthase subunit b of Prochlorococcus marinus (strain MIT 9211).